The following is a 202-amino-acid chain: Protein DCV1 (202 aa).

The signal sequence occupies residues 1 to 18 (MLNYKLILLFSSFLQLIS). Transmembrane regions (helical) follow at residues 91–107 (IGGL…LTFI), 137–155 (ILTL…LLCM), and 168–189 (LVWL…FLSF).

The protein resides in the membrane. The sequence is that of Protein DCV1 (DCV1) from Saccharomyces cerevisiae (strain ATCC 204508 / S288c) (Baker's yeast).